The chain runs to 294 residues: Holothin acyltransferase (294 aa).

Residues 17-146 form the N-acetyltransferase domain; it reads WTSKPASLEE…SRLVGIHNQQ (130 aa).

The enzyme catalyses marinoloyl-CoA C + holothin = thiomarinol C + CoA. It carries out the reaction pseudomonoyl-CoA C + holothin = pseudomonic acid C--holothin + CoA. It functions in the pathway antibiotic biosynthesis. Acyltransferase that catalyzes the formation of pseudomonic acid C-holothin (PAC-holothin), a thiomarinol analog, from pseudomonoyl-CoA C (PAC-CoA) and holothin. Accepts linear CoA substrates of different lengths, including propionyl-, hexanoyl-, octanoyl-, oleoyl- and dodecanoyl-CoA, readily converting all into the corresponding acyl-holothin adducts. In vivo, is probably involved in the biosynthesis of thiomarinol, a naturally occurring double-headed antibiotic. The protein is Holothin acyltransferase of Pseudoalteromonas sp. (strain SANK 73390).